We begin with the raw amino-acid sequence, 358 residues long: DNA-directed RNA polymerase subunit alpha (358 aa).

An alpha N-terminal domain (alpha-NTD) region spans residues 1 to 244; the sequence is MENKLFSCIE…NLFLSIYDTS (244 aa). Residues 287-358 form an alpha C-terminal domain (alpha-CTD) region; that stretch reads YKTSFDKNLT…KMVKYGTVNK (72 aa).

Belongs to the RNA polymerase alpha chain family. As to quaternary structure, homodimer. The RNAP catalytic core consists of 2 alpha, 1 beta, 1 beta' and 1 omega subunit. When a sigma factor is associated with the core the holoenzyme is formed, which can initiate transcription.

It is found in the plastid. It localises to the chloroplast. It catalyses the reaction RNA(n) + a ribonucleoside 5'-triphosphate = RNA(n+1) + diphosphate. In terms of biological role, DNA-dependent RNA polymerase catalyzes the transcription of DNA into RNA using the four ribonucleoside triphosphates as substrates. The polypeptide is DNA-directed RNA polymerase subunit alpha (rpoA) (Bigelowiella natans (Pedinomonas minutissima)).